Here is a 375-residue protein sequence, read N- to C-terminus: Pulmonary surfactant-associated protein D (375 aa).

A signal peptide spans Met-1 to Glu-20. S-nitrosocysteine is present on residues Cys-35 and Cys-40. The interval Ser-45–Leu-221 is disordered. A Collagen-like domain is found at Gly-46–Pro-222. Residues Arg-50–Asp-65 are compositionally biased toward basic and acidic residues. Over residues Pro-66–Pro-86 the composition is skewed to low complexity. A 4-hydroxyproline modification is found at Pro-78. Lys-87 is modified (5-hydroxylysine). Residue Asn-90 is glycosylated (N-linked (GlcNAc...) asparagine). Pro-96 carries the post-translational modification 4-hydroxyproline. Lys-99 bears the 5-hydroxylysine mark. Over residues Ser-105–Pro-114 the composition is skewed to pro residues. 2 stretches are compositionally biased toward low complexity: residues Pro-116–Gln-132 and Lys-138–Pro-150. 4-hydroxyproline occurs at positions 171 and 177. A compositionally biased stretch (basic and acidic residues) spans Lys-204 to Lys-216. The stretch at Asp-223–Glu-252 forms a coiled coil. Residues Val-260–Phe-375 enclose the C-type lectin domain. 2 disulfide bridges follow: Cys-281–Cys-373 and Cys-351–Cys-365.

Belongs to the SFTPD family. As to quaternary structure, oligomeric complex of 4 set of homotrimers. In terms of processing, the N-terminus is blocked. Post-translationally, hydroxylation on proline residues within the sequence motif, GXPG, is most likely to be 4-hydroxy as this fits the requirement for 4-hydroxylation in vertebrates. S-nitrosylation at Cys-35 and Cys-40 alters the quaternary structure which results in a pro-inflammatory chemoattractive signaling activity with macrophages. In terms of tissue distribution, expressed in lung, brain, pancreas and adipose tissue (mainly mature adipocytes).

The protein localises to the secreted. It is found in the extracellular space. Its subcellular location is the extracellular matrix. The protein resides in the surface film. Functionally, contributes to the lung's defense against inhaled microorganisms, organic antigens and toxins. Interacts with compounds such as bacterial lipopolysaccharides, oligosaccharides and fatty acids and modulates leukocyte action in immune response. May participate in the extracellular reorganization or turnover of pulmonary surfactant. Binds strongly maltose residues and to a lesser extent other alpha-glucosyl moieties. The chain is Pulmonary surfactant-associated protein D (SFTPD) from Homo sapiens (Human).